A 161-amino-acid chain; its full sequence is Endoribonuclease YbeY (161 aa).

Zn(2+) contacts are provided by His127, His131, and His137.

Belongs to the endoribonuclease YbeY family. It depends on Zn(2+) as a cofactor.

Its subcellular location is the cytoplasm. In terms of biological role, single strand-specific metallo-endoribonuclease involved in late-stage 70S ribosome quality control and in maturation of the 3' terminus of the 16S rRNA. The protein is Endoribonuclease YbeY of Listeria welshimeri serovar 6b (strain ATCC 35897 / DSM 20650 / CCUG 15529 / CIP 8149 / NCTC 11857 / SLCC 5334 / V8).